Reading from the N-terminus, the 126-residue chain is Fluoride-specific ion channel FluC 2 (126 aa).

4 helical membrane passes run 11–31 (VLLI…ICEH), 36–56 (LGIL…MYDA), 69–89 (AFGT…VQSF), and 93–113 (FLPA…GVFF). Residues Gly76 and Thr79 each contribute to the Na(+) site.

The protein belongs to the fluoride channel Fluc/FEX (TC 1.A.43) family.

The protein resides in the cell membrane. It carries out the reaction fluoride(in) = fluoride(out). Its activity is regulated as follows. Na(+) is not transported, but it plays an essential structural role and its presence is essential for fluoride channel function. Its function is as follows. Fluoride-specific ion channel. Important for reducing fluoride concentration in the cell, thus reducing its toxicity. This is Fluoride-specific ion channel FluC 2 from Methanosarcina mazei (strain ATCC BAA-159 / DSM 3647 / Goe1 / Go1 / JCM 11833 / OCM 88) (Methanosarcina frisia).